The sequence spans 351 residues: Anthranilate phosphoribosyltransferase (351 aa).

5-phospho-alpha-D-ribose 1-diphosphate-binding positions include Gly80, 83-84, Thr88, 90-93, 108-116, and Ser120; these read GD, NIST, and KHGNRSITS. Gly80 contributes to the anthranilate binding site. Ser92 provides a ligand contact to Mg(2+). Asn111 serves as a coordination point for anthranilate. Arg166 is an anthranilate binding site. Positions 229 and 230 each coordinate Mg(2+).

The protein belongs to the anthranilate phosphoribosyltransferase family. In terms of assembly, homodimer. Mg(2+) serves as cofactor.

The enzyme catalyses N-(5-phospho-beta-D-ribosyl)anthranilate + diphosphate = 5-phospho-alpha-D-ribose 1-diphosphate + anthranilate. It functions in the pathway amino-acid biosynthesis; L-tryptophan biosynthesis; L-tryptophan from chorismate: step 2/5. Catalyzes the transfer of the phosphoribosyl group of 5-phosphorylribose-1-pyrophosphate (PRPP) to anthranilate to yield N-(5'-phosphoribosyl)-anthranilate (PRA). The chain is Anthranilate phosphoribosyltransferase from Chlorobaculum tepidum (strain ATCC 49652 / DSM 12025 / NBRC 103806 / TLS) (Chlorobium tepidum).